The primary structure comprises 168 residues: Variant surface antigen D (168 aa).

Residues 1-29 (MKKSIFSKKLLVSFGSLVTLAAIPLIAIS) form the signal peptide. C30 is lipidated: N-palmitoyl cysteine. The S-diacylglycerol cysteine moiety is linked to residue C30. The tract at residues 33-168 (TNTDQSQQPG…STSTSNMNTR (136 aa)) is disordered. Composition is skewed to low complexity over residues 35 to 44 (TDQSQQPGSG) and 52 to 71 (GTTT…ESGT). Gly residues predominate over residues 72–81 (TTGGQTGTTT). A run of 7 repeats spans residues 81-92 (TGGQSDSTSTSK), 93-104 (EQGSSDSTSTSK), 105-116 (EQGSSDSTSTSK), 117-128 (EQGSSDSTSTSK), 129-140 (EQGSSDSTSTSK), 141-152 (EQGSSDSTSTSK), and 153-164 (EQGSSDSTSTSN). The interval 81–164 (TGGQSDSTST…GSSDSTSTSN (84 aa)) is 7 X 12 AA tandem repeats. A compositionally biased stretch (low complexity) spans 82 to 168 (GGQSDSTSTS…STSTSNMNTR (87 aa)).

The protein resides in the cell membrane. In terms of biological role, responsible for the antigenic diversity for host adaptation. Expression in E.coli of a construct containing vlpD, vlpE, and vlpF yields antigenically distinguishable products corresponding to each gene. This Mesomycoplasma hyorhinis (Mycoplasma hyorhinis) protein is Variant surface antigen D (vlpD).